A 413-amino-acid polypeptide reads, in one-letter code: DnaJ protein homolog (413 aa).

The 66-residue stretch at 10 to 75 (NTKYYEILGV…REIYDQYGED (66 aa)) folds into the J domain. A CR-type zinc finger spans residues 133–217 (GTSKKLSLSR…CKGEKVVQEK (85 aa)). 4 CXXCXGXG motif repeats span residues 146–153 (CSKCKGKG), 162–169 (CPGCQGSG), 189–196 (CNECKGTG), and 205–212 (CSQCKGEK). The interval 387 to 413 (RRKQAQEAYDEDEDMHGGAQRVQCAQQ) is disordered. Cysteine methyl ester is present on cysteine 410. Cysteine 410 carries S-farnesyl cysteine lipidation. Residues 411–413 (AQQ) constitute a propeptide, removed in mature form.

As to expression, expressed in seedlings in all tissues, but exceedingly high levels in hypocotyledons and roots.

The protein resides in the cell membrane. Functionally, plays a continuous role in plant development probably in the structural organization of compartments. This chain is DnaJ protein homolog (DNAJ1), found in Cucumis sativus (Cucumber).